Reading from the N-terminus, the 204-residue chain is Ras-related protein Rab-7L1 (204 aa).

6 residues coordinate GTP: Ser33, Lys34, His35, Tyr36, Lys37, and Thr39. The Effector region signature appears at 36-44; the sequence is YKSTVGVDF. Thr71 is modified (phosphothreonine; by LRRK2). Ser72 carries the phosphoserine modification. GTP is bound by residues Lys126, Val156, and Lys157. 2 S-geranylgeranyl cysteine lipidation sites follow: Cys203 and Cys204.

It belongs to the small GTPase superfamily. Rab family. In terms of assembly, interacts with LRRK2 (via the N-terminus); this interaction is direct and stimulates kinase activity.

It is found in the cell membrane. The protein localises to the cytoplasm. The protein resides in the perinuclear region. Its subcellular location is the golgi apparatus. It localises to the golgi apparatus membrane. It is found in the trans-Golgi network. The protein localises to the cytoskeleton. Functionally, the small GTPases Rab are key regulators in vesicle trafficking. Essential for maintaining the integrity of endosome-trans-Golgi network structure. Together with LRRK2, plays a role in the retrograde trafficking pathway for recycling proteins, such as mannose 6 phosphate receptor (M6PR), between lysosomes and the Golgi apparatus in a retromer-dependent manner. Recruits LRRK2 to the Golgi apparatus and stimulates LRRK2 kinase activity. Stimulates phosphorylation of RAB10 'Thr-73' by LRRK2. Also regulates neuronal process morphology in the intact central nervous system (CNS). In Mus musculus (Mouse), this protein is Ras-related protein Rab-7L1 (Rab29).